The following is a 100-amino-acid chain: MIPLQHGLILAAILFILGLTGLVIRRNLLFMLIGLEIMINASALAFVVAGSYWGQTDGQVMYILAISLAAAEASIGLALLLQLHRRRQNLNIDSVSEMRG.

3 helical membrane passes run leucine 4–isoleucine 24, leucine 28–valine 48, and valine 60–leucine 80.

Belongs to the complex I subunit 4L family. As to quaternary structure, NDH-1 is composed of 13 different subunits. Subunits NuoA, H, J, K, L, M, N constitute the membrane sector of the complex.

It is found in the cell inner membrane. It catalyses the reaction a quinone + NADH + 5 H(+)(in) = a quinol + NAD(+) + 4 H(+)(out). In terms of biological role, NDH-1 shuttles electrons from NADH, via FMN and iron-sulfur (Fe-S) centers, to quinones in the respiratory chain. The immediate electron acceptor for the enzyme in this species is believed to be ubiquinone. Couples the redox reaction to proton translocation (for every two electrons transferred, four hydrogen ions are translocated across the cytoplasmic membrane), and thus conserves the redox energy in a proton gradient. The sequence is that of NADH-quinone oxidoreductase subunit K from Shigella sonnei (strain Ss046).